The sequence spans 513 residues: Histidine ammonia-lyase (513 aa).

The 5-imidazolinone (Ala-Gly) cross-link spans 144–146 (ASG). S145 bears the 2,3-didehydroalanine (Ser) mark.

It belongs to the PAL/histidase family. In terms of processing, contains an active site 4-methylidene-imidazol-5-one (MIO), which is formed autocatalytically by cyclization and dehydration of residues Ala-Ser-Gly.

The protein localises to the cytoplasm. The catalysed reaction is L-histidine = trans-urocanate + NH4(+). Its pathway is amino-acid degradation; L-histidine degradation into L-glutamate; N-formimidoyl-L-glutamate from L-histidine: step 1/3. This chain is Histidine ammonia-lyase, found in Streptococcus gordonii (strain Challis / ATCC 35105 / BCRC 15272 / CH1 / DL1 / V288).